The primary structure comprises 254 residues: Pyridoxine 5'-phosphate synthase (254 aa).

Asn-12 contacts 3-amino-2-oxopropyl phosphate. Residue 14–15 (DH) coordinates 1-deoxy-D-xylulose 5-phosphate. Arg-23 lines the 3-amino-2-oxopropyl phosphate pocket. Catalysis depends on His-48, which acts as the Proton acceptor. Residues Arg-50 and His-55 each coordinate 1-deoxy-D-xylulose 5-phosphate. Residue Glu-75 is the Proton acceptor of the active site. Thr-105 serves as a coordination point for 1-deoxy-D-xylulose 5-phosphate. His-199 functions as the Proton donor in the catalytic mechanism. 3-amino-2-oxopropyl phosphate-binding positions include Gly-200 and 221–222 (GF).

It belongs to the PNP synthase family. In terms of assembly, homooctamer; tetramer of dimers.

It is found in the cytoplasm. It catalyses the reaction 3-amino-2-oxopropyl phosphate + 1-deoxy-D-xylulose 5-phosphate = pyridoxine 5'-phosphate + phosphate + 2 H2O + H(+). The protein operates within cofactor biosynthesis; pyridoxine 5'-phosphate biosynthesis; pyridoxine 5'-phosphate from D-erythrose 4-phosphate: step 5/5. Its function is as follows. Catalyzes the complicated ring closure reaction between the two acyclic compounds 1-deoxy-D-xylulose-5-phosphate (DXP) and 3-amino-2-oxopropyl phosphate (1-amino-acetone-3-phosphate or AAP) to form pyridoxine 5'-phosphate (PNP) and inorganic phosphate. In Rhodopseudomonas palustris (strain HaA2), this protein is Pyridoxine 5'-phosphate synthase.